The following is a 90-amino-acid chain: DNA/RNA-binding protein Alba (90 aa).

N6-acetyllysine is present on Lys-11.

This sequence belongs to the histone-like Alba family. In terms of processing, acetylated. Acetylation at Lys-11 decreases DNA-binding affinity.

It is found in the cytoplasm. It localises to the chromosome. Its function is as follows. Binds double-stranded DNA tightly but without sequence specificity. Involved in DNA compaction. The chain is DNA/RNA-binding protein Alba from Picrophilus torridus (strain ATCC 700027 / DSM 9790 / JCM 10055 / NBRC 100828 / KAW 2/3).